The chain runs to 211 residues: Ribosomal RNA small subunit methyltransferase G (211 aa).

Residues G73, 126-127, and R142 contribute to the S-adenosyl-L-methionine site; that span reads IE.

Belongs to the methyltransferase superfamily. RNA methyltransferase RsmG family.

The protein localises to the cytoplasm. It catalyses the reaction guanosine(527) in 16S rRNA + S-adenosyl-L-methionine = N(7)-methylguanosine(527) in 16S rRNA + S-adenosyl-L-homocysteine. Specifically methylates the N7 position of guanine in position 527 of 16S rRNA. In Methylorubrum extorquens (strain CM4 / NCIMB 13688) (Methylobacterium extorquens), this protein is Ribosomal RNA small subunit methyltransferase G.